Consider the following 882-residue polypeptide: Molybdenum cofactor sulfurase (882 aa).

Residue Lys265 is modified to N6-(pyridoxal phosphate)lysine. Cys425 is a catalytic residue. Residues 496 to 546 are disordered; it reads GQPLPLATPGEAGAPPEDSEAQNAVPAARARGSSSPQEDTSPHSGVWNNSP. Positions 527 to 546 are enriched in polar residues; it reads GSSSPQEDTSPHSGVWNNSP. 2 positions are modified to phosphoserine: Ser528 and Ser530. In terms of domain architecture, MOSC spans 707 to 868; sequence KQSSDFQRNA…LSVGSQVLPL (162 aa).

Belongs to the class-V pyridoxal-phosphate-dependent aminotransferase family. MOCOS subfamily. The cofactor is pyridoxal 5'-phosphate. As to expression, ubiquitously expressed.

The enzyme catalyses Mo-molybdopterin + L-cysteine + AH2 = thio-Mo-molybdopterin + L-alanine + A + H2O. It functions in the pathway cofactor biosynthesis; molybdopterin biosynthesis. Its function is as follows. Sulfurates the molybdenum cofactor. Sulfation of molybdenum is essential for xanthine dehydrogenase (XDH) and aldehyde oxidase (ADO) enzymes in which molybdenum cofactor is liganded by 1 oxygen and 1 sulfur atom in active form. The chain is Molybdenum cofactor sulfurase from Bos taurus (Bovine).